Reading from the N-terminus, the 203-residue chain is Ras-related protein Rab-13 (203 aa).

GTP-binding residues include Ser17, Gly18, Gly20, Lys21, Thr22, Cys23, and Thr40. Mg(2+) is bound at residue Thr22. Residues 31-45 (DNFNSTYISTIGIDF) carry the Switch 1 motif. Residue Thr40 coordinates Mg(2+). Glycyl lysine isopeptide (Lys-Gly) (interchain with G-Cter in ubiquitin) cross-links involve residues Lys46 and Lys58. Mg(2+) is bound at residue Asp63. The Switch 2 motif lies at 63 to 80 (DTAGQERFKTITTAYYRG). 6 residues coordinate GTP: Gly66, Asn121, Lys122, Asp124, Ala152, and Lys153. The disordered stretch occupies residues 173–203 (TGGRRSGNSSKPSSTDLKVSDKKNSNKCSLG). A Phosphoserine modification is found at Ser178. Residues 178–189 (SGNSSKPSSTDL) show a composition bias toward polar residues. Cys200 is modified (cysteine methyl ester). Cys200 carries the S-geranylgeranyl cysteine lipid modification. The propeptide at 201–203 (SLG) is removed in mature form.

Belongs to the small GTPase superfamily. Rab family. In terms of assembly, interacts (GTP-bound form) with MICALL2; competes with RAB8A and is involved in tight junctions assembly. Interacts (GTP-bound form) with MICALL1. Interacts (GTP-bound form) with MICAL1, MICAL3, MICALCL, EHBP1 and EHBP1L1; ternary complexes of RAB8A, RAB13 and either MICAL1 or EHBP1L1 are possible. Interacts with PRKACA; downstream effector of RAB13 involved in tight junction assembly. Interacts with GRB2; may recruit RAB13 to the leading edge of migrating endothelial cells where it can activate RHOA. Interacts (isoprenylated form) with PDE6D; dissociates RAB13 from membranes. Interacts with BICDL2/BICDR2. Interacts with LEPROT and LEPROTL1. Mg(2+) serves as cofactor. Ubiquitinated via 'Lys-11'-linked ubiquitination on Lys-46 and Lys-58; impairing the recruitment of guanosine diphosphate (GDP) dissociation inhibitor 1/GDI1. As to expression, highest levels found in lung, kidney, whole brain and spinal cord. Expressed in all tissues tested including Sertoli and germ cells (at protein level). Also detected in osteoclasts.

Its subcellular location is the cell membrane. The protein localises to the cytoplasmic vesicle membrane. It localises to the cell junction. The protein resides in the tight junction. It is found in the golgi apparatus. Its subcellular location is the trans-Golgi network membrane. The protein localises to the recycling endosome membrane. It localises to the cell projection. The protein resides in the lamellipodium. It carries out the reaction GTP + H2O = GDP + phosphate + H(+). Regulated by guanine nucleotide exchange factors (GEFs) including DENND1C, which promote the exchange of bound GDP for free GTP. Regulated by GTPase activating proteins (GAPs) which increase the GTP hydrolysis activity. Inhibited by GDP dissociation inhibitors (GDIs). Activated in response to insulin. The small GTPases Rab are key regulators of intracellular membrane trafficking, from the formation of transport vesicles to their fusion with membranes. Rabs cycle between an inactive GDP-bound form and an active GTP-bound form that is able to recruit to membranes different sets of downstream effectors directly responsible for vesicle formation, movement, tethering and fusion. RAB13 is involved in endocytic recycling and regulates the transport to the plasma membrane of transmembrane proteins like the tight junction protein OCLN/occludin. Thereby, it regulates the assembly and the activity of tight junctions. Moreover, it may also regulate tight junction assembly by activating the PKA signaling pathway and by reorganizing the actin cytoskeleton through the activation of the downstream effectors PRKACA and MICALL2 respectively. Through its role in tight junction assembly, may play a role in the establishment of Sertoli cell barrier. Plays also a role in angiogenesis through regulation of endothelial cells chemotaxis. Also involved in neurite outgrowth. Has also been proposed to play a role in post-Golgi membrane trafficking from the TGN to the recycling endosome. Finally, it has been involved in insulin-induced transport to the plasma membrane of the glucose transporter GLUT4 and therefore may play a role in glucose homeostasis. In Rattus norvegicus (Rat), this protein is Ras-related protein Rab-13.